The following is a 284-amino-acid chain: Signal peptidase I (284 aa).

The helical transmembrane segment at 4-22 (NFPLLLVIAVAVCGLLALL) threads the bilayer. Topologically, residues 23-58 (DLVFFAPRRRSAIASYQGSVSQPDAVVIEKLNKEPL) are cytoplasmic. Residues 59-77 (LVEYGKSFFPVLFIVLVLR) traverse the membrane as a helical segment. Residues 78 to 284 (SFLVEPFQIP…PNFSRVGLIK (207 aa)) lie on the Periplasmic side of the membrane. Catalysis depends on residues serine 90 and lysine 145.

This sequence belongs to the peptidase S26 family.

Its subcellular location is the cell inner membrane. It catalyses the reaction Cleavage of hydrophobic, N-terminal signal or leader sequences from secreted and periplasmic proteins.. The sequence is that of Signal peptidase I (lepB) from Pseudomonas fluorescens.